The following is a 151-amino-acid chain: FUN14 domain-containing protein 2 (151 aa).

The Cytoplasmic portion of the chain corresponds to 1 to 42 (MAANSQGNFDGKFEALDLAELTKKQPWWRKLFGQESGPSAEK). A helical membrane pass occupies residues 43 to 63 (YSVATQLVIGGVTGWCTGFVF). Topologically, residues 64–69 (QKVGKL) are mitochondrial intermembrane. Residues 70–90 (AATAVGGGFFLLQLANHTGYI) traverse the membrane as a helical segment. The Cytoplasmic portion of the chain corresponds to 91–126 (KVDWQRVEKDMKKAKEQLKIRKNKQIPTEVKSKAEE). A helical transmembrane segment spans residues 127–147 (VVSFVKKNVLVTGGFFGGFLL). Over 148–151 (GMAS) the chain is Mitochondrial intermembrane.

Belongs to the FUN14 family. As to expression, highly expressed in platelet (at protein level). Expressed in liver, brain, heart and muscle.

The protein resides in the mitochondrion outer membrane. It is found in the nucleus. Functionally, binds directly and specifically 1,2-Diacyl-sn-glycero-3-phospho-(1'-myo-inositol-3',4',5'-bisphosphate) (PIP3) leading to the recruitment of PIP3 to mitochondria and may play a role in the regulation of the platelet activation via AKT/GSK3B/cGMP signaling pathways. May act as transcription factor that regulates SREBP1 (isoform SREBP-1C) expression in order to modulate triglyceride (TG) homeostasis in hepatocytes. This is FUN14 domain-containing protein 2 from Mus musculus (Mouse).